The sequence spans 271 residues: Membrane protein insertase YidC 1 (271 aa).

The N-terminal stretch at 1-20 (MKKKLKTFSLILLTGSLLVA) is a signal peptide. Cys21 is lipidated: N-palmitoyl cysteine. Residue Cys21 is the site of S-diacylglycerol cysteine attachment. A run of 4 helical transmembrane segments spans residues 45 to 65 (IQWL…TLII), 124 to 144 (YASV…FQAL), 163 to 183 (PDPY…STWL), and 201 to 221 (VMPF…VLYW).

It belongs to the OXA1/ALB3/YidC family. Type 2 subfamily.

It is found in the cell membrane. Its function is as follows. Required for the insertion and/or proper folding and/or complex formation of integral membrane proteins into the membrane. Involved in integration of membrane proteins that insert both dependently and independently of the Sec translocase complex, as well as at least some lipoproteins. The sequence is that of Membrane protein insertase YidC 1 from Streptococcus agalactiae serotype III (strain NEM316).